A 199-amino-acid polypeptide reads, in one-letter code: MIANKITINKIQNGTATIEVTFSKFKLADANKKDFVLEVKDSANDDASAISATELVFDANKKILTGKLNGLASNINYKISKFTLNNNEIKFDFKQEDQQELLNQYIQQAELNTIIDKANKKINIKLQNFSILNSFQDNQPVLTFDIEINKKDGITQVVHKSLTKNQLLNPNGLEIDLKDKMKNNIDYWTLAYVVWFLAI.

It to U.parvum UU376.

This is an uncharacterized protein from Ureaplasma parvum serovar 3 (strain ATCC 700970).